The sequence spans 203 residues: MFNRFNKFQAAVALALLSRGALGDSYTNSTSSADLSSITSVSSASASATASDSLSSSDGTVYLPSTTISGDLTVTGKVIATEAVEVAAGGKLTLLDGEKYVFSSDLKVHGDLVVEKSEASYEGTAFDVSGETFEVSGNFSAEETGAVSASIYSFTPSSFKSSGDISLSLSKAKKGEVTFSPYSNAGTFSLSNAILNGGSVSGL.

An N-terminal signal peptide occupies residues 1-23 (MFNRFNKFQAAVALALLSRGALG). N-linked (GlcNAc...) asparagine glycans are attached at residues N28 and N138. N184 carries the GPI-anchor amidated asparagine lipid modification. Positions 185 to 203 (AGTFSLSNAILNGGSVSGL) are cleaved as a propeptide — removed in mature form.

The protein localises to the cell membrane. The chain is Putative GPI-anchored protein YHR214W from Saccharomyces cerevisiae (strain ATCC 204508 / S288c) (Baker's yeast).